The sequence spans 467 residues: Dynactin subunit 4 (467 aa).

An N-acetylalanine modification is found at Ala2. Positions Gln152–Asn172 form a coiled coil. Residue Ser203 is modified to Phosphoserine. Lys222 participates in a covalent cross-link: Glycyl lysine isopeptide (Lys-Gly) (interchain with G-Cter in SUMO2). Thr414 carries the post-translational modification Phosphothreonine.

The protein belongs to the dynactin subunit 4 family. Subunit of dynactin, a multiprotein complex part of a tripartite complex with dynein and a adapter, such as BICDL1, BICD2 or HOOK3. The dynactin complex is built around ACTR1A/ACTB filament and consists of an actin-related filament composed of a shoulder domain, a pointed end and a barbed end. Its length is defined by its flexible shoulder domain. The soulder is composed of 2 DCTN1 subunits, 4 DCTN2 and 2 DCTN3. The 4 DCNT2 (via N-terminus) bind the ACTR1A filament and act as molecular rulers to determine the length. The pointed end is important for binding dynein-dynactin cargo adapters. Consists of 4 subunits: ACTR10, DCNT4, DCTN5 and DCTN6. The barbed end is composed of a CAPZA1:CAPZB heterodimers, which binds ACTR1A/ACTB filament and dynactin and stabilizes dynactin. Interacts with ATP7B, but not ATP7A, in a copper-dependent manner. Interacts with ANK2; this interaction is required for localization at costameres. Interacts with N4BP2L1.

The protein localises to the cytoplasm. It localises to the cytoskeleton. It is found in the microtubule organizing center. Its subcellular location is the centrosome. The protein resides in the stress fiber. The protein localises to the cell cortex. It localises to the myofibril. It is found in the sarcomere. Part of the dynactin complex that activates the molecular motor dynein for ultra-processive transport along microtubules. The polypeptide is Dynactin subunit 4 (Dctn4) (Mus musculus (Mouse)).